Here is a 70-residue protein sequence, read N- to C-terminus: DNA-directed RNA polymerase subunit omega (70 aa).

The protein belongs to the RNA polymerase subunit omega family. The RNAP catalytic core consists of 2 alpha, 1 beta, 1 beta' and 1 omega subunit. When a sigma factor is associated with the core the holoenzyme is formed, which can initiate transcription.

The enzyme catalyses RNA(n) + a ribonucleoside 5'-triphosphate = RNA(n+1) + diphosphate. Promotes RNA polymerase assembly. Latches the N- and C-terminal regions of the beta' subunit thereby facilitating its interaction with the beta and alpha subunits. The polypeptide is DNA-directed RNA polymerase subunit omega (Staphylococcus haemolyticus (strain JCSC1435)).